Reading from the N-terminus, the 117-residue chain is Biogenesis of lysosome-related organelles complex 1 subunit BLS1 (117 aa).

A disordered region spans residues 97 to 117; the sequence is EGKAQDTEQAPGKGDRIFRSD.

This sequence belongs to the BLOC1S1 family. Component of the biogenesis of lysosome-related organelles complex-1 (BLOC-1).

Its subcellular location is the endosome. Functionally, component of the biogenesis of lysosome-related organelles complex-1 (BLOC-1), a complex involved in endosomal cargo sorting. The chain is Biogenesis of lysosome-related organelles complex 1 subunit BLS1 (BLS1) from Eremothecium gossypii (strain ATCC 10895 / CBS 109.51 / FGSC 9923 / NRRL Y-1056) (Yeast).